The sequence spans 437 residues: UDP-N-acetylmuramoylalanine--D-glutamate ligase (437 aa).

Residue 112-118 (GSNGKST) participates in ATP binding.

The protein belongs to the MurCDEF family.

Its subcellular location is the cytoplasm. The enzyme catalyses UDP-N-acetyl-alpha-D-muramoyl-L-alanine + D-glutamate + ATP = UDP-N-acetyl-alpha-D-muramoyl-L-alanyl-D-glutamate + ADP + phosphate + H(+). The protein operates within cell wall biogenesis; peptidoglycan biosynthesis. In terms of biological role, cell wall formation. Catalyzes the addition of glutamate to the nucleotide precursor UDP-N-acetylmuramoyl-L-alanine (UMA). This Haemophilus influenzae (strain 86-028NP) protein is UDP-N-acetylmuramoylalanine--D-glutamate ligase.